The sequence spans 118 residues: Large ribosomal subunit protein bL20 (118 aa).

It belongs to the bacterial ribosomal protein bL20 family.

In terms of biological role, binds directly to 23S ribosomal RNA and is necessary for the in vitro assembly process of the 50S ribosomal subunit. It is not involved in the protein synthesizing functions of that subunit. In Thermotoga maritima (strain ATCC 43589 / DSM 3109 / JCM 10099 / NBRC 100826 / MSB8), this protein is Large ribosomal subunit protein bL20 (rplT).